Reading from the N-terminus, the 119-residue chain is Aspartate 1-decarboxylase (119 aa).

Ser25 (schiff-base intermediate with substrate; via pyruvic acid) is an active-site residue. Pyruvic acid (Ser) is present on Ser25. Thr57 serves as a coordination point for substrate. Tyr58 (proton donor) is an active-site residue. Gly73–Ala75 lines the substrate pocket.

This sequence belongs to the PanD family. Heterooctamer of four alpha and four beta subunits. The cofactor is pyruvate. Is synthesized initially as an inactive proenzyme, which is activated by self-cleavage at a specific serine bond to produce a beta-subunit with a hydroxyl group at its C-terminus and an alpha-subunit with a pyruvoyl group at its N-terminus.

Its subcellular location is the cytoplasm. It catalyses the reaction L-aspartate + H(+) = beta-alanine + CO2. Its pathway is cofactor biosynthesis; (R)-pantothenate biosynthesis; beta-alanine from L-aspartate: step 1/1. In terms of biological role, catalyzes the pyruvoyl-dependent decarboxylation of aspartate to produce beta-alanine. This chain is Aspartate 1-decarboxylase, found in Thermosipho melanesiensis (strain DSM 12029 / CIP 104789 / BI429).